A 341-amino-acid chain; its full sequence is UDP-3-O-acylglucosamine N-acyltransferase (341 aa).

The active-site Proton acceptor is the histidine 239.

The protein belongs to the transferase hexapeptide repeat family. LpxD subfamily. As to quaternary structure, homotrimer.

It carries out the reaction a UDP-3-O-[(3R)-3-hydroxyacyl]-alpha-D-glucosamine + a (3R)-hydroxyacyl-[ACP] = a UDP-2-N,3-O-bis[(3R)-3-hydroxyacyl]-alpha-D-glucosamine + holo-[ACP] + H(+). It participates in bacterial outer membrane biogenesis; LPS lipid A biosynthesis. In terms of biological role, catalyzes the N-acylation of UDP-3-O-acylglucosamine using 3-hydroxyacyl-ACP as the acyl donor. Is involved in the biosynthesis of lipid A, a phosphorylated glycolipid that anchors the lipopolysaccharide to the outer membrane of the cell. The polypeptide is UDP-3-O-acylglucosamine N-acyltransferase (Shewanella sp. (strain MR-4)).